An 880-amino-acid polypeptide reads, in one-letter code: Valine--tRNA ligase (880 aa).

The 'HIGH' region signature appears at 49 to 59; it reads PNVTGRLHLGH. The 'KMSKS' region motif lies at 525-529; it reads KMSKS. K528 contacts ATP. Positions 809–879 form a coiled coil; the sequence is LEGLINIDEE…AVQKRMAELK (71 aa).

It belongs to the class-I aminoacyl-tRNA synthetase family. ValS type 1 subfamily. In terms of assembly, monomer.

The protein resides in the cytoplasm. The catalysed reaction is tRNA(Val) + L-valine + ATP = L-valyl-tRNA(Val) + AMP + diphosphate. In terms of biological role, as ValRS can inadvertently accommodate and process structurally similar amino acids such as threonine, to avoid such errors, it has a 'posttransfer' editing activity that hydrolyzes mischarged Thr-tRNA(Val) in a tRNA-dependent manner. Catalyzes the attachment of valine to tRNA(Val). The chain is Valine--tRNA ligase from Bacillus subtilis (strain 168).